Here is a 379-residue protein sequence, read N- to C-terminus: Cobalt-precorrin-5B C(1)-methyltransferase (379 aa).

The protein belongs to the CbiD family.

The catalysed reaction is Co-precorrin-5B + S-adenosyl-L-methionine = Co-precorrin-6A + S-adenosyl-L-homocysteine. The protein operates within cofactor biosynthesis; adenosylcobalamin biosynthesis; cob(II)yrinate a,c-diamide from sirohydrochlorin (anaerobic route): step 6/10. In terms of biological role, catalyzes the methylation of C-1 in cobalt-precorrin-5B to form cobalt-precorrin-6A. This Klebsiella pneumoniae subsp. pneumoniae (strain ATCC 700721 / MGH 78578) protein is Cobalt-precorrin-5B C(1)-methyltransferase.